We begin with the raw amino-acid sequence, 218 residues long: MGQKINPLGFRLGTTQSHHSLWFAQPKKYCEGLEEDKKIRDCIKNYVQKNIRISSGMEGIARIEIQKRIDLIQVIIYMGFPKLLIEDKPRRVEELQMNVQKELNCVNRKLNIAITRISTPYGHPNILAEFIAGQLKNRVSFRKAMKKAIELTEQANTKGIQVQIAGRIDGKEIARVEWIREGRVPLQTIEAKIDYCSYTVRTIYGVLGIKIWIFVDEE.

Positions Val-47–Ser-118 constitute a KH type-2 domain.

This sequence belongs to the universal ribosomal protein uS3 family. As to quaternary structure, part of the 30S ribosomal subunit.

The protein resides in the plastid. Its subcellular location is the chloroplast. In Aethionema cordifolium (Lebanon stonecress), this protein is Small ribosomal subunit protein uS3c (rps3).